Here is a 264-residue protein sequence, read N- to C-terminus: Teichoic acids export ATP-binding protein TagH (264 aa).

An ABC transporter domain is found at 24–243; that stretch reads IKDALIPKNK…YEAFLKTFKK (220 aa). Position 57 to 64 (57 to 64) interacts with ATP; it reads GINGSGKS.

It belongs to the ABC transporter superfamily. Teichoic acids exporter (TC 3.A.1.104.1) family. As to quaternary structure, the complex is composed of two ATP-binding proteins (TagH) and two transmembrane proteins (TagG).

Its subcellular location is the cell membrane. The catalysed reaction is ATP + H2O + teichoic acidSide 1 = ADP + phosphate + teichoic acidSide 2.. In terms of biological role, part of the ABC transporter complex TagGH involved in teichoic acids export. Responsible for energy coupling to the transport system. This chain is Teichoic acids export ATP-binding protein TagH, found in Staphylococcus epidermidis (strain ATCC 35984 / DSM 28319 / BCRC 17069 / CCUG 31568 / BM 3577 / RP62A).